The sequence spans 139 residues: Early placenta insulin-like peptide (139 aa).

A signal peptide spans 1–25; it reads MASLFRSYLPAIWLLLSQLLRESLA. 3 disulfides stabilise this stretch: C31/C125, C43/C138, and C124/C129. Positions 59 to 114 are cleaved as a propeptide — c peptide; that stretch reads LESGRPKEMVSTSNNKDGQALGTTSEFIPNLSPELKKPLSEGQPSLKKIILSRKKR.

Belongs to the insulin family. As to expression, expressed in placenta, uterus and in fetal perichondrium. Expression levels were increased in both early placentas and molar pregnancies and were reduced in choriocarcinoma cells.

The protein resides in the secreted. May play an important role in trophoblast development and in the regulation of bone formation. This chain is Early placenta insulin-like peptide (INSL4), found in Homo sapiens (Human).